Reading from the N-terminus, the 988-residue chain is Voltage-gated delayed rectifier potassium channel KCNH5 (988 aa).

At 1 to 217 (MPGGKRGLVA…LHYCAFKTTW (217 aa)) the chain is on the cytoplasmic side. In terms of domain architecture, PAS spans 14–86 (TFLENIVRRS…TIEKVRQTFD (73 aa)). Residues 91–143 (NCFEVLLYKKNRTPVWFYMQIAPIRNEHEKVVLFLCTFKDITLFKQPIEDDST) form the PAC domain. Residues 218–238 (DWVILILTFYTAIMVPYNVSF) traverse the membrane as a helical segment. The Extracellular portion of the chain corresponds to 239 to 243 (KTKQN). A helical transmembrane segment spans residues 244–264 (NIAWLVLDSVVDVIFLVDIVL). Residues 265–291 (NFHTTFVGPGGEVISDPKLIRMNYLKT) lie on the Cytoplasmic side of the membrane. Residues 292-312 (WFVIDLLSCLPYDIINAFENV) form a helical membrane-spanning segment. The Extracellular segment spans residues 313-319 (DEGISSL). The helical; Voltage-sensor transmembrane segment at 320 to 340 (FSSLKVVRLLRLGRVARKLDH) threads the bilayer. Residues 341–346 (YLEYGA) lie on the Cytoplasmic side of the membrane. A helical transmembrane segment spans residues 347–367 (AVLVLLVCVFGLVAHWLACIW). Over 368–419 (YSIGDYEVIDEVTNTIQIDSWLYQLALSIGTPYRYNTSAGIWEGGPSKDSLY) the chain is Extracellular. A glycan (N-linked (GlcNAc...) asparagine) is linked at Asn403. The segment at residues 420 to 440 (VSSLYFTMTSLTTIGFGNIAP) is an intramembrane region (pore-forming). The Selectivity filter motif lies at 432 to 437 (TIGFGN). Residues 441 to 446 (TTDVEK) lie on the Extracellular side of the membrane. The chain crosses the membrane as a helical span at residues 447-467 (MFSVAMMMVGSLLYATIFGNV). The Cytoplasmic portion of the chain corresponds to 468 to 988 (TTIFQQMYAN…PESDKDEINF (521 aa)). An a nucleoside 3',5'-cyclic phosphate-binding site is contributed by 550 to 668 (AFRLASDGCL…SFSRNLTLTC (119 aa)). Positions 704–715 (HPVRKLFQKFKQ) are calmodulin-binding. A disordered region spans residues 721–741 (IQGSAQSDPERSQLQVESRPL). The segment covering 723 to 741 (GSAQSDPERSQLQVESRPL) has biased composition (polar residues). Residue Lys785 forms a Glycyl lysine isopeptide (Lys-Gly) (interchain with G-Cter in ubiquitin) linkage. Residues 838–893 (GLLSEDPKGSDSENSVTKNPLRKTDSCDSGITKSDLRLDKAGEARSPLEHSPSQAD) are disordered. The span at 871–885 (SDLRLDKAGEARSPL) shows a compositional bias: basic and acidic residues. The residue at position 883 (Ser883) is a Phosphoserine. The CAD (involved in subunit assembly) stretch occupies residues 909–948 (TLQEVKHELKEDIQLLSCRMTALEKQVAEILKLLSEKSVP).

It belongs to the potassium channel family. H (Eag) (TC 1.A.1.20) subfamily. Kv10.2/KCNH5 sub-subfamily. Homotetramer. The potassium channel is probably composed of a homo- or heterotetrameric complex of pore-forming alpha subunits that can associate with modulating beta subunits. Heteromultimer with KCNH1/EAG.

The protein resides in the membrane. The enzyme catalyses K(+)(in) = K(+)(out). Functionally, pore-forming (alpha) subunit of a voltage-gated delayed rectifier potassium channel that mediates outward-rectifying potassium currents which, on depolarization, reaches a steady-state level and do not inactivate. The kinetic is characterized by a slow activation time course and a small voltage dependence of the activation time constants, therefore, starts to open at more negative voltages. The activation kinetics depend on the prepulse potential and external divalent cation concentration. The time course of activation is biphasic with a fast and a slowly activating current component. With negative prepulses, the current activation is delayed and slowed down several fold, whereas more positive prepulses speed up activation, therefore the activation rate depends on holding potential. This is Voltage-gated delayed rectifier potassium channel KCNH5 from Mus musculus (Mouse).